A 657-amino-acid polypeptide reads, in one-letter code: Polycomb protein suz12-A (657 aa).

A disordered region spans residues 335–363 (TAPVAKPLATRNSESSTVDSSKTSNIKPP). Positions 347–358 (SESSTVDSSKTS) are enriched in low complexity. A C2H2-type zinc finger spans residues 413 to 436 (LHCPWCTLNCRKLYSLLKHLKLSH). The segment at 528-604 (RLYFHSDSCT…NQMNQACMSF (77 aa)) is VEFS-box.

It belongs to the VEFS (VRN2-EMF2-FIS2-SU(Z)12) family. Component of the prc2/eed-ezh2 complex.

Its subcellular location is the nucleus. In terms of biological role, polycomb group (PcG) protein. Component of the prc2/eed-ezh2 complex, which methylates 'Lys-9' and 'Lys-27' of histone H3, leading to transcriptional repression of the affected target gene. The chain is Polycomb protein suz12-A (suz12a) from Danio rerio (Zebrafish).